Reading from the N-terminus, the 692-residue chain is Sulfhydryl oxidase 2 (692 aa).

A signal peptide spans 1-38 (MAAARAVARDPGAYARQPPSLRAARLPRLLFLLAVVAA). A Thioredoxin domain is found at 54-172 (SDAVWLLDSG…RQTMIDFLQN (119 aa)). N71 carries an N-linked (GlcNAc...) asparagine glycan. Residues C85 and C88 each act as nucleophile in the active site. 2 disulfides stabilise this stretch: C85–C88 and C116–C125. 3 N-linked (GlcNAc...) asparagine glycosylation sites follow: N172, N212, and N260. C412 and C424 form a disulfide bridge. Residues 415–524 (SRLELRGYPC…EDPKFPKVPW (110 aa)) form the ERV/ALR sulfhydryl oxidase domain. FAD contacts are provided by residues R420, W427, H431, E472, H476, 499 to 506 (WRKHNMVN), K521, and W524. C470 and C473 are disulfide-bonded. A disulfide bridge connects residues C530 and C533. A disordered region spans residues 568–607 (DQGSPGEWEAQGREQEEGKGLNPSGKSWRHHDTGSLRPPH). Residues 577 to 586 (AQGREQEEGK) are compositionally biased toward basic and acidic residues. A helical transmembrane segment spans residues 656-676 (SLCVVLYVASSLFLMIMYFFF).

This sequence belongs to the quiescin-sulfhydryl oxidase (QSOX) family. The cofactor is FAD.

The protein resides in the membrane. The enzyme catalyses 2 R'C(R)SH + O2 = R'C(R)S-S(R)CR' + H2O2. Functionally, catalyzes the oxidation of sulfhydryl groups in peptide and protein thiols to disulfides with the reduction of oxygen to hydrogen peroxide. May contribute to disulfide bond formation in a variety of secreted proteins. In Mus musculus (Mouse), this protein is Sulfhydryl oxidase 2 (Qsox2).